The following is a 180-amino-acid chain: ATP synthase subunit delta (180 aa).

This sequence belongs to the ATPase delta chain family. As to quaternary structure, F-type ATPases have 2 components, F(1) - the catalytic core - and F(0) - the membrane proton channel. F(1) has five subunits: alpha(3), beta(3), gamma(1), delta(1), epsilon(1). F(0) has three main subunits: a(1), b(2) and c(10-14). The alpha and beta chains form an alternating ring which encloses part of the gamma chain. F(1) is attached to F(0) by a central stalk formed by the gamma and epsilon chains, while a peripheral stalk is formed by the delta and b chains.

It is found in the cell inner membrane. F(1)F(0) ATP synthase produces ATP from ADP in the presence of a proton or sodium gradient. F-type ATPases consist of two structural domains, F(1) containing the extramembraneous catalytic core and F(0) containing the membrane proton channel, linked together by a central stalk and a peripheral stalk. During catalysis, ATP synthesis in the catalytic domain of F(1) is coupled via a rotary mechanism of the central stalk subunits to proton translocation. Its function is as follows. This protein is part of the stalk that links CF(0) to CF(1). It either transmits conformational changes from CF(0) to CF(1) or is implicated in proton conduction. The chain is ATP synthase subunit delta from Legionella pneumophila subsp. pneumophila (strain Philadelphia 1 / ATCC 33152 / DSM 7513).